The primary structure comprises 470 residues: Nitric oxide synthase, inducible (470 aa).

Positions 2, 3, and 7 each coordinate L-arginine. Positions 11, 93, and 106 each coordinate (6R)-L-erythro-5,6,7,8-tetrahydrobiopterin. Tyr121 contributes to the heme b binding site. Residues 145-165 are calmodulin-binding; that stretch reads FKAVARAALFSSTLMSRVLAN. A Flavodoxin-like domain is found at 169 to 307; the sequence is CTVLYATETG…AFSAWALTAL (139 aa). Positions 175, 176, 177, 179, 180, 221, 222, 258, 265, 291, and 295 each coordinate FMN. Arg380 lines the NADP(+) pocket. His403 provides a ligand contact to FAD. Thr440 is a binding site for NADP(+).

This sequence belongs to the NOS family. Homodimer. Heme b is required as a cofactor. Requires FAD as cofactor. The cofactor is FMN. (6R)-L-erythro-5,6,7,8-tetrahydrobiopterin serves as cofactor.

It localises to the cytoplasm. It is found in the cytosol. The enzyme catalyses 2 L-arginine + 3 NADPH + 4 O2 + H(+) = 2 L-citrulline + 2 nitric oxide + 3 NADP(+) + 4 H2O. With respect to regulation, not stimulated by calcium/calmodulin. Its function is as follows. Produces nitric oxide (NO) which is a messenger molecule with diverse functions throughout the body. In macrophages, NO mediates tumoricidal and bactericidal actions. Also has nitrosylase activity and mediates cysteine S-nitrosylation of cytoplasmic target proteins such COX2. The chain is Nitric oxide synthase, inducible (nos2) from Oncorhynchus mykiss (Rainbow trout).